The chain runs to 237 residues: N-(5'-phosphoribosyl)anthranilate isomerase (237 aa).

The protein belongs to the TrpF family.

The enzyme catalyses N-(5-phospho-beta-D-ribosyl)anthranilate = 1-(2-carboxyphenylamino)-1-deoxy-D-ribulose 5-phosphate. It functions in the pathway amino-acid biosynthesis; L-tryptophan biosynthesis; L-tryptophan from chorismate: step 3/5. The chain is N-(5'-phosphoribosyl)anthranilate isomerase (TRP1) from Komagataella pastoris (Yeast).